The following is a 122-amino-acid chain: Acidic phospholipase A2 homolog vipoxin A chain (122 aa).

7 disulfide bridges follow: C26–C115, C28–C44, C43–C95, C49–C122, C50–C88, C57–C81, and C75–C86.

The protein belongs to the phospholipase A2 family. Group II subfamily. D49 sub-subfamily. As to quaternary structure, heterodimer of A and B (AC P14420) chains; non-covalently linked. The A chain (acidic) is non-toxic, and increases the toxicity of the B chain (basic). The A chain may act as factor stabilizing the complex structure and hence retaining its toxicity by preventing non-specific binding. Upon binding to the target membranes the A chain may dissociate. In terms of tissue distribution, expressed by the venom gland.

It localises to the secreted. Heterodimer: postsynaptic neurotoxin. Its function is as follows. Monomer: Acidic phospholipase A2 homolog that is non-toxic. The chain is Acidic phospholipase A2 homolog vipoxin A chain from Vipera ammodytes meridionalis (Eastern sand viper).